A 66-amino-acid chain; its full sequence is Large ribosomal subunit protein uL29 (66 aa).

The protein belongs to the universal ribosomal protein uL29 family.

The protein is Large ribosomal subunit protein uL29 of Geobacillus kaustophilus (strain HTA426).